Reading from the N-terminus, the 342-residue chain is Putative ABC transporter anion-binding protein HVO_1888 (342 aa).

The tat-type signal signal peptide spans 1 to 32 (MAIERRRFLQAAGVGAVLGLSGCTGNTSPPQA). A compositionally biased stretch (polar residues) spans 24-37 (TGNTSPPQANNETA). Residues 24–52 (TGNTSPPQANNETAEGSGGSESGDGSTQE) form a disordered region.

The complex is composed of two ATP-binding proteins (HVO_1886), two transmembrane proteins (HVO_1887) and a solute-binding protein (HVO_1888). In terms of processing, predicted to be exported by the Tat system. The position of the signal peptide cleavage has not been experimentally proven.

Its function is as follows. Part of an ABC transporter complex involved in anions import. The polypeptide is Putative ABC transporter anion-binding protein HVO_1888 (Haloferax volcanii (strain ATCC 29605 / DSM 3757 / JCM 8879 / NBRC 14742 / NCIMB 2012 / VKM B-1768 / DS2) (Halobacterium volcanii)).